Reading from the N-terminus, the 130-residue chain is Ribonuclease pancreatic (130 aa).

A signal peptide spans 1–6 (VQPSLG). Positions 13 and 16 each coordinate substrate. His18 serves as the catalytic Proton acceptor. 4 disulfides stabilise this stretch: Cys32–Cys90, Cys46–Cys101, Cys64–Cys116, and Cys71–Cys78. A glycan (N-linked (GlcNAc...) asparagine) is linked at Asn40. Residues 47-51 (KPVNT), Lys72, and Arg91 contribute to the substrate site. His125 functions as the Proton donor in the catalytic mechanism.

It belongs to the pancreatic ribonuclease family. Monomer. Interacts with and forms tight 1:1 complexes with RNH1. Dimerization of two such complexes may occur. Interaction with RNH1 inhibits this protein. Pancreas.

Its subcellular location is the secreted. It carries out the reaction an [RNA] containing cytidine + H2O = an [RNA]-3'-cytidine-3'-phosphate + a 5'-hydroxy-ribonucleotide-3'-[RNA].. It catalyses the reaction an [RNA] containing uridine + H2O = an [RNA]-3'-uridine-3'-phosphate + a 5'-hydroxy-ribonucleotide-3'-[RNA].. In terms of biological role, endonuclease that catalyzes the cleavage of RNA on the 3' side of pyrimidine nucleotides. Acts on single-stranded and double-stranded RNA. This is Ribonuclease pancreatic (RNASE1) from Cricetulus griseus (Chinese hamster).